The following is a 747-amino-acid chain: Probable alpha-galactosidase C (747 aa).

The signal sequence occupies residues 1 to 24; it reads MVAFMNSATFVAGLFTLWSRPIWA. Residues Asn36, Asn182, Asn190, Asn362, Asn429, and Asn449 are each glycosylated (N-linked (GlcNAc...) asparagine). The Nucleophile role is filled by Asp507. N-linked (GlcNAc...) asparagine glycosylation occurs at Asn534. Asp569 functions as the Proton donor in the catalytic mechanism.

Belongs to the glycosyl hydrolase 36 family. As to quaternary structure, homotetramer. Requires Mg(2+) as cofactor. NAD(+) serves as cofactor.

The protein localises to the secreted. The enzyme catalyses Hydrolysis of terminal, non-reducing alpha-D-galactose residues in alpha-D-galactosides, including galactose oligosaccharides, galactomannans and galactolipids.. Its function is as follows. Hydrolyzes a variety of simple alpha-D-galactoside as well as more complex molecules such as oligosaccharides and polysaccharides. The chain is Probable alpha-galactosidase C (aglC) from Aspergillus terreus (strain NIH 2624 / FGSC A1156).